A 578-amino-acid polypeptide reads, in one-letter code: MALSWRSWLANEGVKHLCLLVWLSLNVLLFWKTFLLYNQGPEYYYIHQMLGLGLCLSRASASVLNLNCSLILLPMCRTVLAYLRGSQKVPSRRTRRLLDKSKTLHITCGITICIFSGVHVAAHLVNALNFSVNYSEHFLALNAARYQNEDPRKLLFTTVPGLTGVCMVVVLFLMVTASTYAIRVSNYDIFWYTHNLFFVFYMLLLLHVSGGLLKYQTNLDTHPPGCISLNRTPSQNMSIADYVSEHFHGSLPGGFSKLEDHYQKTLVKICLEEPKFQAHFPQTWIWISGPLCLYCAERLYRCIRSNKPVTIISVINHPSDVMELRMIKENFKARPGQYIILHCPSVSALENHPFTLTMCPTETKATFGVHFKVVGDWTERFRDLLLPPSSQDSEILPFIQSRNYPKLYIDGPFGSPFEESLNYEVSLCVAGGIGVTPFASILNTLLDDWKPYKLRRLYFIWVCRDIQSFQWFADLLYVLHNKFWQENRPDFVNIQLYLSQTDGIQKIIGEKYHTLNSRLFIGRPRWKLLFDEIAKCNRGKTVGVFCCGPSSISKTLHNLSNRNNSYGTKFEYNKESFS.

Residues 1 to 16 (MALSWRSWLANEGVKH) are Cytoplasmic-facing. A helical transmembrane segment spans residues 17–37 (LCLLVWLSLNVLLFWKTFLLY). Residues 38–62 (NQGPEYYYIHQMLGLGLCLSRASAS) are Extracellular-facing. The region spanning 58 to 303 (RASASVLNLN…YCAERLYRCI (246 aa)) is the Ferric oxidoreductase domain. Residues 63-83 (VLNLNCSLILLPMCRTVLAYL) traverse the membrane as a helical segment. At 84-104 (RGSQKVPSRRTRRLLDKSKTL) the chain is on the cytoplasmic side. Residues 105 to 125 (HITCGITICIFSGVHVAAHLV) traverse the membrane as a helical segment. Residues 126–154 (NALNFSVNYSEHFLALNAARYQNEDPRKL) are Extracellular-facing. N-linked (GlcNAc...) asparagine glycosylation occurs at N133. Residues 155 to 175 (LFTTVPGLTGVCMVVVLFLMV) traverse the membrane as a helical segment. Residues 176-188 (TASTYAIRVSNYD) lie on the Cytoplasmic side of the membrane. A helical transmembrane segment spans residues 189–209 (IFWYTHNLFFVFYMLLLLHVS). Topologically, residues 210–424 (GGLLKYQTNL…SPFEESLNYE (215 aa)) are extracellular. The tract at residues 218 to 273 (NLDTHPPGCISLNRTPSQNMSIADYVSEHFHGSLPGGFSKLEDHYQKTLVKICLEE) is E-loop; essential for H2O2 generating catalytic activity. Residues 248–575 (HGSLPGGFSK…YGTKFEYNKE (328 aa)) form a mediates interaction with TLR4 region. The FAD-binding FR-type domain maps to 304–419 (RSNKPVTIIS…DGPFGSPFEE (116 aa)). The chain crosses the membrane as a helical span at residues 425–445 (VSLCVAGGIGVTPFASILNTL). The Cytoplasmic segment spans residues 446–578 (LDDWKPYKLR…KFEYNKESFS (133 aa)).

Interacts with TLR4. Interacts with, relocalizes and stabilizes CYBA/p22phox. Interacts with protein disulfide isomerase. Interacts with PPP1R15A. Interacts with LRRC8A; this interaction prevents the ubiquitin-mediated degradation of LRRC8A. The cofactor is heme. Post-translationally, N-glycosylation is required for the function. In terms of tissue distribution, expressed in vascular smooth muscle.

Its subcellular location is the cytoplasm. It is found in the endoplasmic reticulum membrane. The protein resides in the cell membrane. The protein localises to the cell junction. It localises to the focal adhesion. Its subcellular location is the nucleus. The enzyme catalyses NADPH + 2 O2 = 2 superoxide + NADP(+) + H(+). It catalyses the reaction NADPH + O2 + H(+) = H2O2 + NADP(+). Its activity is regulated as follows. Activated by insulin. Inhibited by diphenylene iodonium. Inhibited by plumbagin. Activated by phorbol 12-myristate 13-acetate (PMA). In terms of biological role, NADPH oxidase that catalyzes predominantly the reduction of oxygen to H2O2. Can also catalyze to a smaller extent, the reduction of oxygen to superoxide. May function as an oxygen sensor regulating the KCNK3/TASK-1 potassium channel and HIF1A activity. May regulate insulin signaling cascade. May play a role in apoptosis, bone resorption and lipolysaccharide-mediated activation of NFKB. May produce superoxide in the nucleus and play a role in regulating gene expression upon cell stimulation. Promotes ferroptosis, reactive oxygen species production and reduced glutathione (GSH) levels by activating NLRP3 inflammasome activation and cytokine release. This is NADPH oxidase 4 (Nox4) from Rattus norvegicus (Rat).